A 331-amino-acid chain; its full sequence is Spondin-2 (331 aa).

The N-terminal stretch at 1 to 26 (MENPSPAAALGKALCALLLATLGAAG) is a signal peptide. The Spondin domain maps to 31 to 221 (GESICSARAL…EITSSSPSHP (191 aa)). Cysteines 35 and 171 form a disulfide. E141 contacts a divalent metal cation. The Ca(2+) site is built by D160, D188, and D192. Residues 277-331 (DCEVSLWSSWGLCGGHCGRLGTKSRTRYVRVQPANNGSPCPELEEEAECVPDNCV) enclose the TSP type-1 domain. A glycan (C-linked (Man) tryptophan) is linked at W283.

Monomer. Interacts with integrin. In terms of tissue distribution, expressed in normal lung tissue but not in lung carcinoma cell lines.

It localises to the secreted. It is found in the extracellular space. The protein resides in the extracellular matrix. Its function is as follows. Cell adhesion protein that promotes adhesion and outgrowth of hippocampal embryonic neurons. Binds directly to bacteria and their components and functions as an opsonin for macrophage phagocytosis of bacteria. Essential in the initiation of the innate immune response and represents a unique pattern-recognition molecule in the ECM for microbial pathogens. Binds bacterial lipopolysaccharide (LPS). This chain is Spondin-2 (SPON2), found in Homo sapiens (Human).